Consider the following 307-residue polypeptide: tRNA pseudouridine synthase B (307 aa).

The active-site Nucleophile is aspartate 38.

Belongs to the pseudouridine synthase TruB family. Type 1 subfamily.

It catalyses the reaction uridine(55) in tRNA = pseudouridine(55) in tRNA. Functionally, responsible for synthesis of pseudouridine from uracil-55 in the psi GC loop of transfer RNAs. This Bacillus cereus (strain ATCC 10987 / NRS 248) protein is tRNA pseudouridine synthase B.